A 140-amino-acid polypeptide reads, in one-letter code: Large ribosomal subunit protein bL17 (140 aa).

Belongs to the bacterial ribosomal protein bL17 family. Part of the 50S ribosomal subunit. Contacts protein L32.

The polypeptide is Large ribosomal subunit protein bL17 (Beijerinckia indica subsp. indica (strain ATCC 9039 / DSM 1715 / NCIMB 8712)).